Here is a 513-residue protein sequence, read N- to C-terminus: ATP synthase subunit alpha (513 aa).

169 to 176 (GDRQTGKT) is an ATP binding site.

This sequence belongs to the ATPase alpha/beta chains family. F-type ATPases have 2 components, CF(1) - the catalytic core - and CF(0) - the membrane proton channel. CF(1) has five subunits: alpha(3), beta(3), gamma(1), delta(1), epsilon(1). CF(0) has three main subunits: a(1), b(2) and c(9-12). The alpha and beta chains form an alternating ring which encloses part of the gamma chain. CF(1) is attached to CF(0) by a central stalk formed by the gamma and epsilon chains, while a peripheral stalk is formed by the delta and b chains.

It localises to the cell inner membrane. The enzyme catalyses ATP + H2O + 4 H(+)(in) = ADP + phosphate + 5 H(+)(out). Functionally, produces ATP from ADP in the presence of a proton gradient across the membrane. The alpha chain is a regulatory subunit. This Haemophilus influenzae (strain PittGG) protein is ATP synthase subunit alpha.